A 913-amino-acid polypeptide reads, in one-letter code: Zinc finger protein 112 (913 aa).

Residues 8-79 (VTFKDVAVVF…ETETPRDGCS (72 aa)) form the KRAB domain. K256 is covalently cross-linked (Glycyl lysine isopeptide (Lys-Gly) (interchain with G-Cter in SUMO2)). The segment at 258–280 (YPCTGYRKAFSNDSSSEVHQQFH) adopts a C2H2-type 1; degenerate zinc-finger fold. The C2H2-type 2; degenerate zinc-finger motif lies at 443 to 465 (YNSEECGNGFSLASHFQDLQIVH). Residues 471–493 (YKRYVCSNSFSHNLYLQGHPKIH) form a C2H2-type 3; degenerate zinc finger. The C2H2-type 4; degenerate zinc-finger motif lies at 497–519 (KPRKEHGNGFNWSSKLKDHQRVH). C2H2-type zinc fingers lie at residues 525–547 (YKCN…QRVH), 553–575 (YKCE…QRVH), 581–603 (YKCE…QRVH), 609–631 (YKCE…QRVH), 637–659 (FKCE…QRVH), 665–687 (YKCE…QRVH), 693–715 (YQCD…QSVH), 721–743 (YICE…QRVH), 749–771 (YKCE…RRVH), 777–799 (YKCE…QRVH), 805–827 (YKCE…HRVH), 833–855 (YKCE…QRVH), and 861–883 (YKCD…QRVH). A Glycyl lysine isopeptide (Lys-Gly) (interchain with G-Cter in SUMO2) cross-link involves residue K890.

Belongs to the krueppel C2H2-type zinc-finger protein family.

It localises to the nucleus. Functionally, may be involved in transcriptional regulation. The chain is Zinc finger protein 112 (ZNF112) from Homo sapiens (Human).